Reading from the N-terminus, the 2194-residue chain is PDZ and LIM domain protein Zasp (2194 aa).

One can recognise a PDZ domain in the interval 8 to 90 (QIKLSRFDAQ…NFVITVQRGG (83 aa)). Residues 211–277 (TGQSTPAFGN…KPPSTGGLPT (67 aa)) are disordered. Positions 228-253 (PQQLQQPQQQYNQHQQHYHQQQQQQQ) are enriched in low complexity. Residues 280–339 (NICTECERLITGVFVRIKDKNLHVECFKCATCGTSLKNQGYYNFNNKLYCDIHAKQAAIN) form the LIM zinc-binding 1 domain. A compositionally biased stretch (low complexity) spans 415 to 435 (AATPQAATATDSPAATASSSD). Disordered regions lie at residues 415–436 (AATPQAATATDSPAATASSSDN), 457–476 (VALAPPPPQPPTAGGGDQPF), 511–558 (GAAA…AVEE), 580–611 (SRQSQRGSSFTWPPPQDDSHLAPTAAPLYIPP), 623–692 (VQQV…TTSE), 896–940 (AAAA…PRGS), 1223–1260 (LTQKSQQQPPQANQQQQQQQQQRGTQQQQHSQVTQRTQ), 1297–1322 (QSQSSASYSSKATACSNSSSTVPPAN), 1550–1632 (LNAS…QQPE), 1646–1738 (QREQ…YGKT), and 1815–1837 (APPPGFLQQQQQQQQRSAFSGYQ). A compositionally biased stretch (low complexity) spans 515-530 (PKSPVSYPPQQQQQSP). 2 stretches are compositionally biased toward polar residues: residues 580–590 (SRQSQRGSSFT) and 644–667 (VGTSANGAPQWQSYSAPQLTTASA). Positions 676–692 (SSDSYTSTSTTTTTTSE) are enriched in low complexity. Residues 1598 to 1610 (QTGSITTGQSYQG) show a composition bias toward polar residues. Low complexity-rich tracts occupy residues 1616-1630 (SEQSSQSASQSYNQQ), 1646-1668 (QREQSSQLQQQAQSQTQSQTRSQ), and 1699-1727 (SQSVSQSKAQSQSISQAQTQAQSQSQNQS). 3 consecutive LIM zinc-binding domains span residues 2018 to 2078 (PLCN…KYLA), 2079 to 2138 (PTCS…LFTT), and 2139 to 2194 (KCFA…NHAR).

Interacts with alpha-actinin (Actn). In terms of tissue distribution, expression is first detected in the proctodeum and the midgut primordium. In stage 11 embryos, expression is predominant in the leading edge of epidermal cells adjacent to the amnioserosa. Stage 12 embryos exhibit expression in the midgut and the leading edge. Expressed in several rows of germ band cells next to the leading edge at stage 14. Strong expression is visible in the midgut and pharyngeal muscles of stage 17 embryos. Also expressed in somatic muscles and visceral mesoderm. Colocalizes with mys (beta PS integrin) in myotendinous junctions and with Actn in muscle Z lines.

The protein resides in the cytoplasm. Its subcellular location is the cytoskeleton. Functionally, regulator of cell matrix adhesion having two related functions, one upstream of Actn organizing the Z line and the other downstream of integrins regulating assembly of integrin adhesion sites. Also required for the formation of myotendinous junctions in muscles. This chain is PDZ and LIM domain protein Zasp (Zasp52), found in Drosophila melanogaster (Fruit fly).